A 442-amino-acid chain; its full sequence is Cell adhesion molecule 1 (442 aa).

The signal sequence occupies residues 1–44 (MASVVLPSGSQCAAAAAAAAPPGLRLRLLLLLFSAAALIPTGDG). Positions 45–139 (QNLFTKDVTV…PPQESYTTIT (95 aa)) constitute an Ig-like V-type domain. Residues 45–374 (QNLFTKDVTV…EEGSIRAVDH (330 aa)) lie on the Extracellular side of the membrane. C64 and C124 form a disulfide bridge. 4 N-linked (GlcNAc...) asparagine glycosylation sites follow: N67, N101, N113, and N165. Ig-like C2-type domains lie at 144-238 (PRNL…RYLE) and 243-329 (PQVH…YMLY). Intrachain disulfides connect C166–C220 and C267–C313. 2 N-linked (GlcNAc...) asparagine glycosylation sites follow: N304 and N308. The helical transmembrane segment at 375–395 (AVIGGVVAVVVFAMLCLLIIL) threads the bilayer. Topologically, residues 396-442 (GRYFARHKGTYFTHEAKGADDAADADTAIINAEGGQNNSEEKKEYFI) are cytoplasmic. Position 422 is a phosphothreonine (T422). Position 434 is a phosphoserine (S434).

This sequence belongs to the nectin family. In terms of assembly, homodimer (via Ig-like V-type domain). Interacts with FARP1. Interacts (via Ig-like V-type domain) with CRTAM (via Ig-like V-type domain); the interaction competes with CRTAM homodimerization and CADM1 homodimerization. Interacts (via C-terminus) with EPB41L3/DAL1. The interaction with EPB41L3/DAL1 may act to anchor CADM1 to the actin cytoskeleton. Interacts (via C-terminus) with MPP2 (via PDZ domain). Interacts (via C-terminus) with MPP3 (via PDZ domain); this interaction connects CADM1 with DLG1. Interacts (via C-terminus) with PALS2 (via PDZ domain). (Microbial infection) Interacts with herpes virus 8 proteins vFLIP and vGPCR; these interactions are essential for NF-kappa-B activation. In terms of processing, glycosylation at Asn-67 and Asn-101 promotes adhesive binding and synapse induction.

The protein resides in the cell membrane. It is found in the synapse. Its function is as follows. Mediates homophilic cell-cell adhesion in a Ca(2+)-independent manner. Also mediates heterophilic cell-cell adhesion with CADM3 and NECTIN3 in a Ca(2+)-independent manner. Interaction with CRTAM promotes natural killer (NK) cell cytotoxicity and interferon-gamma (IFN-gamma) secretion by CD8+ cells in vitro as well as NK cell-mediated rejection of tumors expressing CADM1 in vivo. In mast cells, may mediate attachment to and promote communication with nerves. CADM1, together with MITF, is essential for development and survival of mast cells in vivo. By interacting with CRTAM and thus promoting the adhesion between CD8+ T-cells and CD8+ dendritic cells, regulates the retention of activated CD8+ T-cell within the draining lymph node. Required for the intestinal retention of intraepithelial CD4+ CD8+ T-cells and, to a lesser extent, intraepithelial and lamina propria CD8+ T-cells and CD4+ T-cells. Interaction with CRTAM promotes the adhesion to gut-associated CD103+ dendritic cells, which may facilitate the expression of gut-homing and adhesion molecules on T-cells and the conversion of CD4+ T-cells into CD4+ CD8+ T-cells. Acts as a synaptic cell adhesion molecule and plays a role in the formation of dendritic spines and in synapse assembly. May be involved in neuronal migration, axon growth, pathfinding, and fasciculation on the axons of differentiating neurons. May play diverse roles in the spermatogenesis including in the adhesion of spermatocytes and spermatids to Sertoli cells and for their normal differentiation into mature spermatozoa. Acts as a tumor suppressor in non-small-cell lung cancer (NSCLC) cells. May contribute to the less invasive phenotypes of lepidic growth tumor cells. In terms of biological role, (Microbial infection) Induces cell fusion in neuron infected by a neuropathogenic strain of measles. Interacts with measles hemagglutinin to trigger hyperfusogenic F-mediated membrane fusion and presumably transsynaptic cell-to-cell transmission of the virus. This is Cell adhesion molecule 1 from Homo sapiens (Human).